We begin with the raw amino-acid sequence, 342 residues long: Aristolochene synthase prx2 (342 aa).

Mg(2+)-binding residues include Asp115, Asn244, Ser248, and Glu252. (2E,6E)-farnesyl diphosphate-binding residues include Arg340 and Tyr341.

This sequence belongs to the terpene synthase family. As to quaternary structure, homodimer. Mg(2+) is required as a cofactor.

The catalysed reaction is (2E,6E)-farnesyl diphosphate = (+)-aristolochene + diphosphate. It functions in the pathway sesquiterpene biosynthesis; aristolochene biosynthesis; aristolochene from farnesyl diphosphate: step 1/1. Aristolochene synthase; part of the gene cluster that mediates the biosynthesis of PR-toxin, a bicyclic sesquiterpene belonging to the eremophilane class and acting as a mycotoxin. The first step of the pathway is catalyzed by the aristolochene synthase which performs the cyclization of trans,trans-farnesyl diphosphate (FPP) to the bicyclic sesquiterpene aristolochene. Following the formation of aristolochene, the non-oxygenated aristolochene is converted to the trioxygenated intermediate eremofortin B, via 7-epi-neopetasone. This conversion appears to involve three enzymes, a hydroxysterol oxidase-like enzyme, the quinone-oxidase prx3 that forms the quinone-type-structure in the bicyclic nucleus of aristolochene with the C8-oxo group and the C-3 hydroxyl group, and the P450 monooxygenase prx9 that introduces the epoxide at the double bond between carbons 1 and 2. No monoxy or dioxy-intermediates have been reported to be released to the broth, so these three early oxidative reactions may be coupled together. Eremofortin B is further oxidized by another P450 monooxygenase, that introduces a second epoxide between carbons 7 and 11 prior to acetylation to eremofortin A by the acetyltransferase prx11. The second epoxidation may be performed by a second P450 monooxygenase. After the acetylation step, the conversion of eremofortin A to eremofortin C and then to PR-toxin requires only two enzymes. First the conversion of eremofortin A to eremofortin C proceeds by oxidation of the side chain of the molecule at C-12 and is catalyzed by the short-chain oxidoreductase prx1. The cytochrome P450 monooxygenase prx8 also plays a role in this step. The primary alcohol formed at C-12 is finally oxidized by the short-chain alcohol dehydrogenase prx4 that forms PR-toxin. The polypeptide is Aristolochene synthase prx2 (Penicillium rubens (strain ATCC 28089 / DSM 1075 / NRRL 1951 / Wisconsin 54-1255) (Penicillium chrysogenum)).